The primary structure comprises 303 residues: Methionyl-tRNA formyltransferase (303 aa).

110–113 serves as a coordination point for (6S)-5,6,7,8-tetrahydrofolate; the sequence is SLLP.

The protein belongs to the Fmt family.

It catalyses the reaction L-methionyl-tRNA(fMet) + (6R)-10-formyltetrahydrofolate = N-formyl-L-methionyl-tRNA(fMet) + (6S)-5,6,7,8-tetrahydrofolate + H(+). Functionally, attaches a formyl group to the free amino group of methionyl-tRNA(fMet). The formyl group appears to play a dual role in the initiator identity of N-formylmethionyl-tRNA by promoting its recognition by IF2 and preventing the misappropriation of this tRNA by the elongation apparatus. The protein is Methionyl-tRNA formyltransferase of Campylobacter lari (strain RM2100 / D67 / ATCC BAA-1060).